The following is a 470-amino-acid chain: UDP-glycosyltransferase 91A1 (470 aa).

UDP-alpha-D-glucose contacts are provided by residues serine 290, 350 to 352 (VEQ), 367 to 375 (HPGWGTIIE), and 389 to 392 (VYDQ).

It belongs to the UDP-glycosyltransferase family.

This Arabidopsis thaliana (Mouse-ear cress) protein is UDP-glycosyltransferase 91A1 (UGT91A1).